The sequence spans 1010 residues: Ubiquitin conjugation factor E4 (1010 aa).

A disordered region spans residues 13 to 70; it reads AKLQQTNSEANSSKEPKESNIAPEPKKPDLKKRFIGSKATTSNSEQKEISPPVTSGAP. Basic and acidic residues predominate over residues 24 to 44; the sequence is SSKEPKESNIAPEPKKPDLKK. A U-box domain is found at 930–1004; it reads DIPDYFLDPL…NTFLKSKRNK (75 aa).

It belongs to the ubiquitin conjugation factor E4 family.

Its subcellular location is the cytoplasm. The protein resides in the nucleus. It participates in protein modification; protein ubiquitination. In terms of biological role, E4 ubiquitin chain-elongation enzyme specifically involved in polyubiquitin chain assembly. Binds to cdc48 and elongates mono- and diubiquitinated ERAD substrates presented by the ufd1-npl4-cdc48 (UNC) AAA ATPase complex to a chain length of 4 to 6 ubiquitin moieties. Delivers these polyubiquitinated substrates to downstream ERAD components, which target them to the proteasome. Enhances ubiquitination at 'Lys-48', but not at 'Lys-29' of the Ub moiety. The chain is Ubiquitin conjugation factor E4 (ufd2) from Schizosaccharomyces pombe (strain 972 / ATCC 24843) (Fission yeast).